A 372-amino-acid polypeptide reads, in one-letter code: NAD(P)H-quinone oxidoreductase subunit 1 (372 aa).

8 helical membrane-spanning segments follow: residues 29 to 49, 97 to 117, 128 to 148, 176 to 196, 204 to 224, 254 to 274, 308 to 328, and 351 to 371; these read WLPFPMLLMIVVATVGVLVTV, LLFTLGPVIVAVPVFLSYLVV, LGVAIFLWIALSSIQPIGLLM, LALAVLAVAMMSNSLSTIDIV, ILGWNIWRQPLGFIIFWIAVL, FALYYLASYVNLVLSSLLVAV, TLGIIMTLLKTYLLVFIAVLL, and VALVNLLLTAALKLTFPFAFG.

This sequence belongs to the complex I subunit 1 family. NDH-1 is composed of at least 11 different subunits.

The protein resides in the cellular thylakoid membrane. The catalysed reaction is a plastoquinone + NADH + (n+1) H(+)(in) = a plastoquinol + NAD(+) + n H(+)(out). The enzyme catalyses a plastoquinone + NADPH + (n+1) H(+)(in) = a plastoquinol + NADP(+) + n H(+)(out). Functionally, NDH-1 shuttles electrons from an unknown electron donor, via FMN and iron-sulfur (Fe-S) centers, to quinones in the respiratory and/or the photosynthetic chain. The immediate electron acceptor for the enzyme in this species is believed to be plastoquinone. Couples the redox reaction to proton translocation, and thus conserves the redox energy in a proton gradient. In Trichodesmium erythraeum (strain IMS101), this protein is NAD(P)H-quinone oxidoreductase subunit 1.